The primary structure comprises 727 residues: Procollagen-lysine,2-oxoglutarate 5-dioxygenase 1 (727 aa).

The first 18 residues, 1–18 (MRPLLLLAPLGWLLLAEA), serve as a signal peptide directing secretion. N-linked (GlcNAc...) asparagine glycosylation is found at Asn-163, Asn-197, and Asn-538. The 92-residue stretch at 636–727 (QFDLAFVVRY…RYIAVSFVDP (92 aa)) folds into the Fe2OG dioxygenase domain. The Fe cation site is built by His-656 and Asp-658. The N-linked (GlcNAc...) asparagine glycan is linked to Asn-686. His-708 is a Fe cation binding site. The active site involves Arg-718.

In terms of assembly, homodimer. Identified in a complex with P3H3 and P3H4. It depends on Fe(2+) as a cofactor. Requires L-ascorbate as cofactor.

Its subcellular location is the rough endoplasmic reticulum membrane. It catalyses the reaction L-lysyl-[collagen] + 2-oxoglutarate + O2 = (5R)-5-hydroxy-L-lysyl-[collagen] + succinate + CO2. Part of a complex composed of PLOD1, P3H3 and P3H4 that catalyzes hydroxylation of lysine residues in collagen alpha chains and is required for normal assembly and cross-linkling of collagen fibrils. Forms hydroxylysine residues in -Xaa-Lys-Gly- sequences in collagens. These hydroxylysines serve as sites of attachment for carbohydrate units and are essential for the stability of the intermolecular collagen cross-links. The protein is Procollagen-lysine,2-oxoglutarate 5-dioxygenase 1 (PLOD1) of Pongo abelii (Sumatran orangutan).